The chain runs to 447 residues: Ribosomal protein uS12 methylthiotransferase RimO (447 aa).

The MTTase N-terminal domain occupies 15–125; the sequence is PRVGFVSLGC…VMQAIHRHLP (111 aa). 6 residues coordinate [4Fe-4S] cluster: cysteine 24, cysteine 60, cysteine 89, cysteine 156, cysteine 160, and cysteine 163. The region spanning 142-379 is the Radical SAM core domain; that stretch reads LTPKHYAYLK…MQWQEEISKK (238 aa). The region spanning 379 to 447 is the TRAM domain; it reads KRLAGKKGRI…GIHDLWAKKI (69 aa).

The protein belongs to the methylthiotransferase family. RimO subfamily. The cofactor is [4Fe-4S] cluster.

It is found in the cytoplasm. It catalyses the reaction L-aspartate(89)-[ribosomal protein uS12]-hydrogen + (sulfur carrier)-SH + AH2 + 2 S-adenosyl-L-methionine = 3-methylsulfanyl-L-aspartate(89)-[ribosomal protein uS12]-hydrogen + (sulfur carrier)-H + 5'-deoxyadenosine + L-methionine + A + S-adenosyl-L-homocysteine + 2 H(+). In terms of biological role, catalyzes the methylthiolation of an aspartic acid residue of ribosomal protein uS12. The polypeptide is Ribosomal protein uS12 methylthiotransferase RimO (Nitrosomonas europaea (strain ATCC 19718 / CIP 103999 / KCTC 2705 / NBRC 14298)).